A 535-amino-acid polypeptide reads, in one-letter code: Cytochrome P450 monooxygenase BOA7 (535 aa).

The chain crosses the membrane as a helical span at residues 20-37 (SIFLILGFFVLAAILIAW). Residues asparagine 65, asparagine 148, asparagine 180, and asparagine 420 are each glycosylated (N-linked (GlcNAc...) asparagine). Cysteine 478 contacts heme.

This sequence belongs to the cytochrome P450 family. Heme is required as a cofactor.

Its subcellular location is the membrane. It participates in polyketide biosynthesis. Functionally, cytochrome P450 monooxygenase; part of the gene cluster B that mediates the biosynthesis of botcinic acid and its botcinin derivatives, acetate-derived polyketides that contribute to virulence when combined with the sesquiterpene botrydial. Botcinic acid and its derivatives have been shown to induce chlorosis and necrosis during host plant infection, but also have antifungal activities. Two polyketide synthases, BOA6 and BOA9, are involved in the biosynthesis of botcinins. BOA6 mediates the formation of the per-methylated tetraketide core by condensation of four units of malonyl-CoA with one unit of acetyl-CoA, which would be methylated in activated methylene groups to yield a bicyclic acid intermediate that could then either be converted to botrylactone derivatives or lose the starter acetate unit through a retro-Claisen type C-C bond cleavage to yield botcinin derivatives. The second polyketide synthase, BOA9, is probably required for the biosynthesis of the tetraketide side chain of botcinins. The methyltransferase (MT) domain within BOA6 is probably responsible for the incorporation of four methyl groups. The trans-enoyl reductase BOA5 might take over the enoyl reductase function of BOA6 that misses an ER domain. The monooxygenases BOA2, BOA3 and BOA4 might be involved in further hydroxylations at C4, C5 and C8, whereas BOA7, close to BOA9, could potentially be involved in the hydroxylation at C4 in the side chain of botcinins. The chain is Cytochrome P450 monooxygenase BOA7 from Botryotinia fuckeliana (strain B05.10) (Noble rot fungus).